The primary structure comprises 499 residues: Dipeptide and tripeptide permease A (499 aa).

Topologically, residues 1–34 (MSTANKKPAESVSMNAFKQPRSFYLIFSIELWER) are cytoplasmic. Residues 35 to 55 (FGFYGLQGIMAVYLVKQLGMS) form a helical membrane-spanning segment. Topologically, residues 56–59 (EADS) are periplasmic. The helical transmembrane segment at 60 to 80 (ITLFSSFSALVYGLVAIGGWL) threads the bilayer. At 81 to 89 (GDKVLGTKR) the chain is on the cytoplasmic side. The chain crosses the membrane as a helical span at residues 90–110 (VIMLGTIVLAIGYALVAWSGH). Asp111 is a topological domain (periplasmic). A helical membrane pass occupies residues 112-132 (AAIVYFGMATIAVGNGLFKAN). Residues 133-153 (PSALLSTCYEKDDPRLDGAFT) lie on the Cytoplasmic side of the membrane. The helical transmembrane segment at 154-174 (MYYMAINIGSFFSMLATPWLA) threads the bilayer. The Periplasmic segment spans residues 175–178 (EKFG). The chain crosses the membrane as a helical span at residues 179–199 (WSVAFSLSFVGMLITLVNFIF). Residues 200 to 217 (CKKWVKDYGSKPDFAPLH) lie on the Cytoplasmic side of the membrane. The chain crosses the membrane as a helical span at residues 218 to 238 (VGKLLATIVGIVVLVAIATWL). The Periplasmic segment spans residues 239-246 (LHNQGIAR). Residues 247 to 267 (LVLGVVALGIVIIFAKEAFAM) form a helical membrane-spanning segment. The Cytoplasmic segment spans residues 268 to 274 (QGAARRK). The chain crosses the membrane as a helical span at residues 275–295 (MIVAFILMLEAIVFFVLYQQM). The Periplasmic segment spans residues 296 to 320 (PTSLNFFAIRNVEHSILGIAFQPEQ). Residues 321–341 (FQALNPFWIMIGSPILAAIYN) form a helical membrane-spanning segment. Over 342–350 (KMGDRLPMP) the chain is Cytoplasmic. A helical membrane pass occupies residues 351-371 (FKFTIGMLLCSGAFLVLPLGA). Residues 372–383 (KFASEAGIVSVN) are Periplasmic-facing. Residues 384 to 404 (WLILSYALQSIGELMISGLGL) form a helical membrane-spanning segment. Residues 405–414 (AMVAQLVPQR) lie on the Cytoplasmic side of the membrane. The chain crosses the membrane as a helical span at residues 415–435 (LMGFIMGSWFLTTAGAAMIAG). The Periplasmic portion of the chain corresponds to 436–459 (KVANLMAVPENVSDPLQSLEVYGR). Residues 460–480 (VFMQIGIATGVIAVLMLLTAP) form a helical membrane-spanning segment. At 481-499 (LLNRMTQEDKPKETDTAHA) the chain is on the cytoplasmic side.

Belongs to the major facilitator superfamily. Proton-dependent oligopeptide transporter (POT/PTR) (TC 2.A.17) family. DtpA subfamily.

Its subcellular location is the cell inner membrane. Its function is as follows. Proton-dependent permease that transports di- and tripeptides. The polypeptide is Dipeptide and tripeptide permease A (Cronobacter turicensis (strain DSM 18703 / CCUG 55852 / LMG 23827 / z3032)).